The primary structure comprises 111 residues: WAP four-disulfide core domain protein 12 (111 aa).

A signal peptide spans 1 to 23; sequence MGSSSFLVLMVSLALVTLVAAEG. In terms of domain architecture, WAP spans 27–74; that stretch reads GIEKAGVCPADNIRCFKSDPPQCHTDQDCLGERKCCYLHCGFKCVIPV. 4 disulfides stabilise this stretch: C34-C62, C41-C66, C49-C61, and C55-C70. Residues 80–111 are disordered; sequence GGNKDEDVSGPCPEPGWEAKSPGSSSTGCPQK. A compositionally biased stretch (polar residues) spans 101 to 111; that stretch reads PGSSSTGCPQK.

The protein localises to the secreted. Functionally, antibacterial protein. Putative acid-stable proteinase inhibitor. This Macaca mulatta (Rhesus macaque) protein is WAP four-disulfide core domain protein 12 (WFDC12).